Here is a 433-residue protein sequence, read N- to C-terminus: Protoheme IX farnesyltransferase 2 (433 aa).

The interval 1-164 (MQRFTGLVTA…LTKPRLMWLL (164 aa)) is unknown. Helical transmembrane passes span 4 to 24 (FTGLVTATTLATYLLVVLGVA), 35 to 55 (AVAHYVTAGAVWLLLVAAAAL), 67 to 87 (WGVTAAAVAYPAQAAVGMAVL), 95 to 115 (LHLFGGVGVFALLLITLTWHL), 160 to 180 (LMWLLCLLALSGMALATVTGA), 184 to 204 (GVTIAATLFGGVLAVGAAGTF), 236 to 256 (AFGVGLLVVSMAVLVWLVNPL), 257 to 277 (AAALTAVAVVYYAVVYTVVLK), 282 to 304 (WNTVIGGGAGALPAVIGWAAVAG), 308 to 330 (LPALLLAAVVFCWTPAHFYNLAI), 357 to 377 (ILYWLGATLLVAGALGAVAGF), 378 to 398 (GPVYALTSAVVGFGFLWTVVV), and 413 to 433 (HASNAYLGALLVAILVETMVI). Positions 165–430 (CLLALSGMAL…ALLVAILVET (266 aa)) are protoheme IX prenyltransferase.

In the C-terminal section; belongs to the UbiA prenyltransferase family. Protoheme IX farnesyltransferase subfamily.

The protein localises to the cell membrane. It catalyses the reaction heme b + (2E,6E)-farnesyl diphosphate + H2O = Fe(II)-heme o + diphosphate. It functions in the pathway porphyrin-containing compound metabolism; heme O biosynthesis; heme O from protoheme: step 1/1. Its function is as follows. Converts heme B (protoheme IX) to heme O by substitution of the vinyl group on carbon 2 of heme B porphyrin ring with a hydroxyethyl farnesyl side group. This chain is Protoheme IX farnesyltransferase 2 (ctaB2), found in Natronomonas pharaonis (strain ATCC 35678 / DSM 2160 / CIP 103997 / JCM 8858 / NBRC 14720 / NCIMB 2260 / Gabara) (Halobacterium pharaonis).